A 357-amino-acid chain; its full sequence is 3-isopropylmalate dehydrogenase (357 aa).

Arg-97, Arg-107, Arg-135, and Asp-224 together coordinate substrate. Mg(2+)-binding residues include Asp-224, Asp-248, and Asp-252. Position 282–294 (282–294 (GSAPDIAGQDKAN)) interacts with NAD(+).

It belongs to the isocitrate and isopropylmalate dehydrogenases family. LeuB type 1 subfamily. In terms of assembly, homodimer. Mg(2+) serves as cofactor. The cofactor is Mn(2+).

It localises to the cytoplasm. The enzyme catalyses (2R,3S)-3-isopropylmalate + NAD(+) = 4-methyl-2-oxopentanoate + CO2 + NADH. The protein operates within amino-acid biosynthesis; L-leucine biosynthesis; L-leucine from 3-methyl-2-oxobutanoate: step 3/4. Functionally, catalyzes the oxidation of 3-carboxy-2-hydroxy-4-methylpentanoate (3-isopropylmalate) to 3-carboxy-4-methyl-2-oxopentanoate. The product decarboxylates to 4-methyl-2 oxopentanoate. The protein is 3-isopropylmalate dehydrogenase of Synechococcus sp. (strain CC9902).